We begin with the raw amino-acid sequence, 307 residues long: UDP-3-O-acyl-N-acetylglucosamine deacetylase (307 aa).

Positions 78, 241, and 245 each coordinate Zn(2+). His268 (proton donor) is an active-site residue.

It belongs to the LpxC family. The cofactor is Zn(2+).

The catalysed reaction is a UDP-3-O-[(3R)-3-hydroxyacyl]-N-acetyl-alpha-D-glucosamine + H2O = a UDP-3-O-[(3R)-3-hydroxyacyl]-alpha-D-glucosamine + acetate. It functions in the pathway glycolipid biosynthesis; lipid IV(A) biosynthesis; lipid IV(A) from (3R)-3-hydroxytetradecanoyl-[acyl-carrier-protein] and UDP-N-acetyl-alpha-D-glucosamine: step 2/6. Catalyzes the hydrolysis of UDP-3-O-myristoyl-N-acetylglucosamine to form UDP-3-O-myristoylglucosamine and acetate, the committed step in lipid A biosynthesis. The protein is UDP-3-O-acyl-N-acetylglucosamine deacetylase of Polaromonas sp. (strain JS666 / ATCC BAA-500).